We begin with the raw amino-acid sequence, 105 residues long: Large ribosomal subunit protein uL24 (105 aa).

Belongs to the universal ribosomal protein uL24 family. In terms of assembly, part of the 50S ribosomal subunit.

Functionally, one of two assembly initiator proteins, it binds directly to the 5'-end of the 23S rRNA, where it nucleates assembly of the 50S subunit. Its function is as follows. One of the proteins that surrounds the polypeptide exit tunnel on the outside of the subunit. The sequence is that of Large ribosomal subunit protein uL24 from Staphylococcus aureus (strain Mu3 / ATCC 700698).